A 90-amino-acid chain; its full sequence is Putative defensin-like protein 64 (90 aa).

A signal peptide spans M1 to T23. Cystine bridges form between C33–C56 and C42–C77.

Belongs to the DEFL family.

It is found in the secreted. The chain is Putative defensin-like protein 64 from Arabidopsis thaliana (Mouse-ear cress).